Consider the following 449-residue polypeptide: Glucose-6-phosphate isomerase (449 aa).

Glu291 (proton donor) is an active-site residue. Active-site residues include His312 and Lys426.

This sequence belongs to the GPI family.

It localises to the cytoplasm. The enzyme catalyses alpha-D-glucose 6-phosphate = beta-D-fructose 6-phosphate. It functions in the pathway carbohydrate biosynthesis; gluconeogenesis. The protein operates within carbohydrate degradation; glycolysis; D-glyceraldehyde 3-phosphate and glycerone phosphate from D-glucose: step 2/4. Its function is as follows. Catalyzes the reversible isomerization of glucose-6-phosphate to fructose-6-phosphate. In Streptococcus pyogenes serotype M3 (strain ATCC BAA-595 / MGAS315), this protein is Glucose-6-phosphate isomerase.